The following is a 156-amino-acid chain: ATP synthase subunit b (156 aa).

The helical transmembrane segment at 12-32 threads the bilayer; it reads VAFFIFVLFCMKFVWPPVIAA.

The protein belongs to the ATPase B chain family. In terms of assembly, F-type ATPases have 2 components, F(1) - the catalytic core - and F(0) - the membrane proton channel. F(1) has five subunits: alpha(3), beta(3), gamma(1), delta(1), epsilon(1). F(0) has three main subunits: a(1), b(2) and c(10-14). The alpha and beta chains form an alternating ring which encloses part of the gamma chain. F(1) is attached to F(0) by a central stalk formed by the gamma and epsilon chains, while a peripheral stalk is formed by the delta and b chains.

It localises to the cell inner membrane. Functionally, f(1)F(0) ATP synthase produces ATP from ADP in the presence of a proton or sodium gradient. F-type ATPases consist of two structural domains, F(1) containing the extramembraneous catalytic core and F(0) containing the membrane proton channel, linked together by a central stalk and a peripheral stalk. During catalysis, ATP synthesis in the catalytic domain of F(1) is coupled via a rotary mechanism of the central stalk subunits to proton translocation. Component of the F(0) channel, it forms part of the peripheral stalk, linking F(1) to F(0). In Pseudomonas paraeruginosa (strain DSM 24068 / PA7) (Pseudomonas aeruginosa (strain PA7)), this protein is ATP synthase subunit b.